A 298-amino-acid polypeptide reads, in one-letter code: Glyoxalase domain-containing protein 4 (298 aa).

The VOC 1 domain maps to Arg5 to Arg130. Residue Lys109 is modified to N6-succinyllysine. Ser131 is modified (phosphoserine). A VOC 2 domain is found at Pro137–Asp258. N6-succinyllysine is present on Lys273.

Belongs to the glyoxalase I family. In terms of assembly, interacts with NUDT9.

Its subcellular location is the mitochondrion. This Rattus norvegicus (Rat) protein is Glyoxalase domain-containing protein 4 (Glod4).